Here is a 137-residue protein sequence, read N- to C-terminus: Large ribosomal subunit protein uL16 (137 aa).

The protein belongs to the universal ribosomal protein uL16 family. Part of the 50S ribosomal subunit.

Functionally, binds 23S rRNA and is also seen to make contacts with the A and possibly P site tRNAs. The polypeptide is Large ribosomal subunit protein uL16 (Aromatoleum aromaticum (strain DSM 19018 / LMG 30748 / EbN1) (Azoarcus sp. (strain EbN1))).